The primary structure comprises 424 residues: Dihydroorotase (424 aa).

Residues His-61 and His-63 each contribute to the Zn(2+) site. Substrate contacts are provided by residues 63–65 and Asn-95; that span reads HLR. The Zn(2+) site is built by Asp-153, His-180, and His-233. Asn-279 provides a ligand contact to substrate. Asp-306 is a Zn(2+) binding site. Asp-306 is an active-site residue. A substrate-binding site is contributed by His-310.

Belongs to the metallo-dependent hydrolases superfamily. DHOase family. Class I DHOase subfamily. The cofactor is Zn(2+).

It catalyses the reaction (S)-dihydroorotate + H2O = N-carbamoyl-L-aspartate + H(+). It participates in pyrimidine metabolism; UMP biosynthesis via de novo pathway; (S)-dihydroorotate from bicarbonate: step 3/3. Its function is as follows. Catalyzes the reversible cyclization of carbamoyl aspartate to dihydroorotate. The chain is Dihydroorotase from Geobacter metallireducens (strain ATCC 53774 / DSM 7210 / GS-15).